The chain runs to 499 residues: Nuclear receptor-binding protein 2 (499 aa).

The segment at methionine 1 to proline 31 is disordered. Positions alanine 7–glutamate 17 are enriched in basic and acidic residues. Over residues aspartate 18–glutamate 28 the composition is skewed to acidic residues. Positions glutamine 36–leucine 304 constitute a Protein kinase domain. Residues alanine 396–glutamate 416 form a disordered region. Residues threonine 407 and threonine 409 each carry the phosphothreonine modification.

This sequence belongs to the protein kinase superfamily. Ser/Thr protein kinase family. As to expression, expressed in Purkinje cells of the cerebellum and neurons in the CA3 region of the hippocampus. Also detected in non-neural tissues including mesenchymal layer adjacent to epithelium in developing bronchi of the lung, the epithelium of the stomach as well as cells in the liver.

It is found in the cytoplasm. In terms of biological role, may regulate apoptosis of neural progenitor cells during their differentiation. The protein is Nuclear receptor-binding protein 2 of Mus musculus (Mouse).